Here is a 95-residue protein sequence, read N- to C-terminus: MYAVVKSGGKQYRVRQGDELLVERLAGEVGDRVELPVSLRAEEGVLDLEPRTARAEILEHLRGEKLKVYKYKPKKGYRRKKGHRQALTRIRVVEV.

The protein belongs to the bacterial ribosomal protein bL21 family. As to quaternary structure, part of the 50S ribosomal subunit. Contacts protein L20.

Its function is as follows. This protein binds to 23S rRNA in the presence of protein L20. The chain is Large ribosomal subunit protein bL21 from Rubrobacter xylanophilus (strain DSM 9941 / JCM 11954 / NBRC 16129 / PRD-1).